The chain runs to 253 residues: Phosphoadenosine 5'-phosphosulfate reductase (253 aa).

C239 functions as the Nucleophile; cysteine thiosulfonate intermediate in the catalytic mechanism.

The protein belongs to the PAPS reductase family. CysH subfamily.

It is found in the cytoplasm. It catalyses the reaction [thioredoxin]-disulfide + sulfite + adenosine 3',5'-bisphosphate + 2 H(+) = [thioredoxin]-dithiol + 3'-phosphoadenylyl sulfate. The protein operates within sulfur metabolism; hydrogen sulfide biosynthesis; sulfite from sulfate: step 3/3. In terms of biological role, catalyzes the formation of sulfite from phosphoadenosine 5'-phosphosulfate (PAPS) using thioredoxin as an electron donor. This Aliivibrio fischeri (strain ATCC 700601 / ES114) (Vibrio fischeri) protein is Phosphoadenosine 5'-phosphosulfate reductase.